The sequence spans 105 residues: Probable molt-inhibiting hormone (105 aa).

The signal sequence occupies residues 1 to 28 (MYRMPMRFWLTAVVMVVVGALLLDTASA). 3 disulfide bridges follow: Cys35-Cys72, Cys52-Cys68, and Cys55-Cys81.

It belongs to the arthropod CHH/MIH/GIH/VIH hormone family. In terms of tissue distribution, expressed in the postmolt, intermolt, and premolt stages of the shrimp eyestalks and the brain.

It localises to the secreted. Inhibits Y-organs where molting hormone (ecdysteroid) is secreted. A molting cycle is initiated when MIH secretion diminishes or stops. The polypeptide is Probable molt-inhibiting hormone (Metapenaeus ensis (Greasyback shrimp)).